Reading from the N-terminus, the 489-residue chain is Hydantoin permease (489 aa).

12 consecutive transmembrane segments (helical) span residues 30–50 (FSLA…IAAG), 58–78 (VWQV…LLFF), 104–124 (LIPI…QTWL), 144–164 (LWIV…ITFI), 167–187 (MNVF…YLML), 207–227 (MPFS…VVSI), 258–278 (LGMV…MVLV), 299–321 (AILF…NLLS), 339–359 (GVIV…AGVL), 362–382 (FLNL…SDYF), 405–424 (RGVN…VSFL), and 428–445 (LMFV…IPAM). 2 residues coordinate Na(+): Ala-38 and Ile-41. Gln-121 provides a ligand contact to substrate. Gly-219 is a substrate binding site. Positions 309, 312, and 313 each coordinate Na(+). Asn-318 is a substrate binding site. The interval 468-489 (PIGPVAPADESATANTKEQNQR) is disordered. Residues 479 to 489 (ATANTKEQNQR) are compositionally biased toward polar residues.

This sequence belongs to the purine-cytosine permease (2.A.39) family.

Its subcellular location is the membrane. Its activity is regulated as follows. Inhibited by dinitrophenol, 5-(2-naphthylmethyl)-D-hydantoin (D-NMH), 5-(2-naphthylmethyl)-L-hydantoin (L-NMH), 5-bromovinylhydantoin (BVH) and 5-indolylmethyl-L-hydantoin (L-IMH). The affinity of benzyl-hydantoin is increased over 10-fold in the presence of 15 mM of sodium. Nucleobase-proton symporter that mediates the sodium-dependent binding and uptake of 5-aryl-substituted hydantoin compounds. 5-indolyl methyl hydantoin and 5-benzyl hydantoin are the preferred substrates, with selectivity for a hydrophobic substituent in position 5 of hydantoin and for the L isomer over the D isomer. This chain is Hydantoin permease, found in Microbacterium maritypicum (Microbacterium liquefaciens).